Here is a 215-residue protein sequence, read N- to C-terminus: Glycerol-3-phosphate acyltransferase (215 aa).

The next 6 helical transmembrane spans lie at 3–23 (LILL…LWIG), 42–61 (TNTF…LIDI), 68–90 (TLLP…FAVL), 110–130 (AGVL…VFVL), 134–154 (LFSM…ISVL), and 162–182 (LLPS…AIII).

This sequence belongs to the PlsY family. In terms of assembly, probably interacts with PlsX.

Its subcellular location is the cell membrane. It catalyses the reaction an acyl phosphate + sn-glycerol 3-phosphate = a 1-acyl-sn-glycero-3-phosphate + phosphate. Its pathway is lipid metabolism; phospholipid metabolism. In terms of biological role, catalyzes the transfer of an acyl group from acyl-phosphate (acyl-PO(4)) to glycerol-3-phosphate (G3P) to form lysophosphatidic acid (LPA). This enzyme utilizes acyl-phosphate as fatty acyl donor, but not acyl-CoA or acyl-ACP. The chain is Glycerol-3-phosphate acyltransferase from Streptococcus equi subsp. equi (strain 4047).